A 463-amino-acid polypeptide reads, in one-letter code: Methionine aminopeptidase 2-2 (463 aa).

Positions Met-1–Thr-97 are disordered. Positions Asp-27–Gly-36 are enriched in polar residues. Acidic residues predominate over residues Gly-46 to Glu-57. Residues Lys-69 to Lys-85 show a composition bias toward basic residues. Residues Ser-86 to Thr-97 are compositionally biased toward polar residues. A substrate-binding site is contributed by His-215. The a divalent metal cation site is built by Asp-236, Asp-247, and His-316. His-324 is a substrate binding site. Residues Glu-349 and Glu-444 each contribute to the a divalent metal cation site.

The protein belongs to the peptidase M24A family. Methionine aminopeptidase eukaryotic type 2 subfamily. Co(2+) is required as a cofactor. Requires Zn(2+) as cofactor. The cofactor is Mn(2+). It depends on Fe(2+) as a cofactor.

Its subcellular location is the cytoplasm. The catalysed reaction is Release of N-terminal amino acids, preferentially methionine, from peptides and arylamides.. In terms of biological role, cotranslationally removes the N-terminal methionine from nascent proteins. The N-terminal methionine is often cleaved when the second residue in the primary sequence is small and uncharged (Met-Ala-, Cys, Gly, Pro, Ser, Thr, or Val). The sequence is that of Methionine aminopeptidase 2-2 from Neosartorya fischeri (strain ATCC 1020 / DSM 3700 / CBS 544.65 / FGSC A1164 / JCM 1740 / NRRL 181 / WB 181) (Aspergillus fischerianus).